Consider the following 147-residue polypeptide: UPF0306 protein YhbP (147 aa).

Belongs to the UPF0306 family.

This Shigella sonnei (strain Ss046) protein is UPF0306 protein YhbP.